Consider the following 379-residue polypeptide: Stimulator of interferon genes protein (379 aa).

A run of 2 helical transmembrane segments spans residues 18–38 (AKKA…DLGE) and 43–63 (ILQW…FKGV). Residues Cys-88 and Cys-91 are each lipidated (S-palmitoyl cysteine). Helical transmembrane passes span 89 to 109 (LGCP…YTPF) and 114 to 134 (HLPF…SILL). The cyclic dinucleotide-binding domain (CBD) stretch occupies residues 153-340 (LNVAQGMAWS…RHLKQEEKEE (188 aa)). Positions 162, 167, 238, and 263 each coordinate 2',3'-cGAMP. 3',3'-c-di-GMP contacts are provided by residues Ser-162, Tyr-167, 238–241 (RVYT), and Thr-263. Tyr-167, Arg-238, and Thr-263 together coordinate 2',3'-cUAMP. Residues 338 to 363 (KEEVTVDSARTSVMPDPSMLPQGPEL) form a disordered region. Residues 340–379 (EVTVDSARTSVMPDPSMLPQGPELLISSMDQPLPLRTDVF) are C-terminal tail (CTT). Position 355 is a phosphoserine (Ser-355). The pLxIS motif motif lies at 363 to 366 (LLIS). At Ser-366 the chain carries Phosphoserine; by TBK1.

The protein belongs to the STING family. Homodimer; forms a homodimer in absence of cyclic nucleotide (c-di-GMP or cGAMP). Homotetramer; in presence of cyclic nucleotide (c-di-GMP or cGAMP), forms tetramers and higher-order oligomers through side-by-side packing. Interacts (when phosphorylated) with IRF3; following activation and phosphorylation on the pLxIS motif by TBK1, recruits IRF3. Interacts with TBK1; when homodimer, leading to subsequent production of IFN-beta. Interacts (via transmembrane domain) with TMEM203. Phosphorylation by TBK1 leads to activation and production of IFN-beta. Following cyclic nucleotide (c-di-GMP or cGAMP)-binding, activation and translocation from the endoplasmic reticulum, STING1 is phosphorylated by TBK1 at Ser-366 in the pLxIS motif. The phosphorylated pLxIS motif constitutes an IRF3-binding motif, leading to recruitment of the transcription factor IRF3 to induce type-I interferons and other cytokines. In contrast, lacks phosphorylation site at position 358, leading to reduced production of type-I interferons and other cytokines.

The protein resides in the endoplasmic reticulum membrane. The protein localises to the cytoplasm. Its subcellular location is the perinuclear region. It is found in the endoplasmic reticulum-Golgi intermediate compartment membrane. It localises to the golgi apparatus membrane. The protein resides in the cytoplasmic vesicle. The protein localises to the autophagosome membrane. Its subcellular location is the mitochondrion outer membrane. It is found in the cell membrane. It catalyses the reaction H(+)(in) = H(+)(out). Its function is as follows. Facilitator of innate immune signaling that acts as a sensor of cytosolic DNA from bacteria and viruses and promotes low production of type I interferon (IFN-alpha and IFN-beta). Compared to other mammals, STING1-dependent type I interferon induction is strongly reduced in bats, suggesting that the cGAS-STING pathway promotes a limited inflammatory response. Innate immune response is triggered in response to non-CpG double-stranded DNA from viruses and bacteria delivered to the cytoplasm. Acts by binding cyclic dinucleotides: recognizes and binds cyclic di-GMP (c-di-GMP), a second messenger produced by bacteria, cyclic UMP-AMP (2',3'-cUAMP), and cyclic GMP-AMP (cGAMP), a messenger produced by CGAS in response to DNA virus in the cytosol. Upon binding to c-di-GMP, cUAMP or cGAMP, STING1 oligomerizes, translocates from the endoplasmic reticulum and is phosphorylated by TBK1 on the pLxIS motif, leading to recruitment and subsequent activation of the transcription factor IRF3 to induce expression of type I interferon and exert a potent anti-viral state. In addition to promote the production of type I interferons, plays a direct role in autophagy. Following cGAMP-binding, STING1 buds from the endoplasmic reticulum into COPII vesicles, which then form the endoplasmic reticulum-Golgi intermediate compartment (ERGIC). The ERGIC serves as the membrane source for WIPI2 recruitment and LC3 lipidation, leading to formation of autophagosomes that target cytosolic DNA or DNA viruses for degradation by the lysosome. Promotes autophagy by acting as a proton channel that directs proton efflux from the Golgi to facilitate MAP1LC3B/LC3B lipidation. The autophagy- and interferon-inducing activities can be uncoupled and autophagy induction is independent of TBK1 phosphorylation. The protein is Stimulator of interferon genes protein of Pteronotus parnellii (Parnell's mustached bat).